The following is a 559-amino-acid chain: Hepatocyte nuclear factor 1-alpha (559 aa).

The region spanning 13 to 44 (GPGRLSALQEQLIWALLGSGLSREVLVHALGE) is the HNF-p1 domain. Positions 14–43 (PGRLSALQEQLIWALLGSGLSREVLVHALG) are dimerization. Positions 49-62 (RVTPGAEKGDRGDG) are enriched in basic and acidic residues. Residues 49 to 73 (RVTPGAEKGDRGDGESSEEGEMDFP) are disordered. The 96-residue stretch at 78-173 (QELEALAPEE…ISQQFTNARH (96 aa)) folds into the POU-specific atypical domain. Interaction with DNA stretches follow at residues 121 to 123 (QRE), 134 to 140 (HLSQHLN), 146 to 149 (KNQK), 192 to 195 (RFKW), 252 to 254 (RVY), and 259 to 262 (NRRK). A Nuclear localization signal motif is present at residues 186-194 (RKGRRNRFK). Residues 188–268 (GRRNRFKWGP…NRRKEEAFRH (81 aa)) constitute a DNA-binding region (homeobox; HNF1-type). Residues 492–559 (TDPEEQTDQP…IPAQMVSTAQ (68 aa)) form a disordered region. The segment covering 499–522 (DQPIQEDSLHLQSPSPVPVSSGNL) has biased composition (polar residues).

It belongs to the HNF1 homeobox family. As to quaternary structure, binds DNA as a dimer. In terms of tissue distribution, expressed in liver, intestine, spleen and kidney.

Its subcellular location is the nucleus. Its function is as follows. Transcriptional activator that regulates the tissue specific expression of multiple genes, especially in pancreas and liver. Binds to the promoter of the albumin gene. The chain is Hepatocyte nuclear factor 1-alpha (hnf1a) from Salmo salar (Atlantic salmon).